The following is a 152-amino-acid chain: Cyanate hydratase (152 aa).

Catalysis depends on residues Arg98, Glu101, and Ser124.

Belongs to the cyanase family.

The enzyme catalyses cyanate + hydrogencarbonate + 3 H(+) = NH4(+) + 2 CO2. Catalyzes the reaction of cyanate with bicarbonate to produce ammonia and carbon dioxide. This chain is Cyanate hydratase, found in Uncinocarpus reesii (strain UAMH 1704).